Consider the following 250-residue polypeptide: Pyrroloquinoline-quinone synthase (250 aa).

This sequence belongs to the PqqC family.

It carries out the reaction 6-(2-amino-2-carboxyethyl)-7,8-dioxo-1,2,3,4,7,8-hexahydroquinoline-2,4-dicarboxylate + 3 O2 = pyrroloquinoline quinone + 2 H2O2 + 2 H2O + H(+). Its pathway is cofactor biosynthesis; pyrroloquinoline quinone biosynthesis. Its function is as follows. Ring cyclization and eight-electron oxidation of 3a-(2-amino-2-carboxyethyl)-4,5-dioxo-4,5,6,7,8,9-hexahydroquinoline-7,9-dicarboxylic-acid to PQQ. In Xanthomonas axonopodis pv. citri (strain 306), this protein is Pyrroloquinoline-quinone synthase.